We begin with the raw amino-acid sequence, 436 residues long: MQPVVETLSGLERRVDLAVSVAEVEKEVQAQLKRVGRTAKVAGFRPGKAPLAMLERSHGPGIRYDVINSLVGRAFEQAVDGAKLRVAGSPTLTPKTEGVAEDTLAFTATFEVYPEVTVPDLSALAVTRYDTPVTDAEVNQTLDVLRKQRAKFEIREGRASQDGDRVVLDFAGTIDGVPFEGGKAEDFPFVLGQGRMLPEFEEAALGLKAGESKVFPLKFPDDYQGKEVAGKTAEFTITVKEVAEGVLPEVDAEFAKSLGQAEGDVEKLKADIRTNIEREVKARLQGRTKGSVMDALVEAGKFDVPKALVDSDVEGRIAAAREELKQRGVPNADSVPMPAEVFSTESERRVRLGLLVSELVKQAQLQAKPEQVRARIEEFAQNYEQPAQVVSYYLADRQRRAEIEAIVLEDNVVAHVLENAKVADEKVPFDQLMGMA.

Residues 163 to 248 (GDRVVLDFAG…VKEVAEGVLP (86 aa)) form the PPIase FKBP-type domain.

Belongs to the FKBP-type PPIase family. Tig subfamily.

The protein localises to the cytoplasm. It catalyses the reaction [protein]-peptidylproline (omega=180) = [protein]-peptidylproline (omega=0). In terms of biological role, involved in protein export. Acts as a chaperone by maintaining the newly synthesized protein in an open conformation. Functions as a peptidyl-prolyl cis-trans isomerase. The chain is Trigger factor from Bordetella pertussis (strain Tohama I / ATCC BAA-589 / NCTC 13251).